The primary structure comprises 705 residues: uncharacterized protein (705 aa).

A DNA-binding region (zn(2)-C6 fungal-type) is located at residues 24-52 (CHFCRVRKLKCDRVRPFCGSCSSRNRKQC).

It is found in the nucleus. This is an uncharacterized protein from Saccharomyces cerevisiae (strain ATCC 204508 / S288c) (Baker's yeast).